Reading from the N-terminus, the 254-residue chain is Cell wall biogenesis protein NCW2 (254 aa).

The first 17 residues, 1-17 (MKACSILFTTLITLAAA), serve as a signal peptide directing secretion. Disordered regions lie at residues 19–57 (KDSG…SAST), 111–143 (TSTA…DGPV), and 167–191 (ATTD…SSTK). The span at 27 to 42 (QNSEDSSQKESSNSQE) shows a compositional bias: low complexity. The span at 43–57 (ITPTTTKEAQESAST) shows a compositional bias: polar residues. Positions 111 to 139 (TSTASVQPTGETSSGITNSASSSTTSTST) are enriched in low complexity. Asparagine 229 carries an N-linked (GlcNAc...) asparagine glycan. Asparagine 232 is lipidated: GPI-anchor amidated asparagine. A propeptide spans 233-254 (GAFAGTHIAYGAGAFAVGALLL) (removed in mature form).

It localises to the cell membrane. In terms of biological role, cell wall biogenesis protein that participates in the organization of the beta-glucan assembly. Involved in the mechanism responsible for cell tolerance to polyhexamethylene biguanide (PHMB), an antifungal agent. This is Cell wall biogenesis protein NCW2 from Saccharomyces cerevisiae (strain ATCC 204508 / S288c) (Baker's yeast).